A 237-amino-acid polypeptide reads, in one-letter code: Probable glutathione-independent glyoxalase HSP32 (237 aa).

Active-site residues include Cys-138, His-139, and Glu-170.

The protein belongs to the peptidase C56 family. HSP31-like subfamily. In terms of assembly, homodimer.

Its subcellular location is the cytoplasm. It localises to the P-body. The enzyme catalyses methylglyoxal + H2O = (R)-lactate + H(+). In terms of biological role, catalyzes the conversion of methylglyoxal (MG) to D-lactate in a single glutathione (GSH)-independent step. May play a role in detoxifying endogenously produced glyoxals. Involved in protection against reactive oxygen species (ROS). Important for viability in stationary phase. May negatively regulate TORC1 in response to nutrient limitation. In Saccharomyces cerevisiae (strain ATCC 204508 / S288c) (Baker's yeast), this protein is Probable glutathione-independent glyoxalase HSP32.